The primary structure comprises 287 residues: Acetyl-coenzyme A carboxylase carboxyl transferase subunit beta (287 aa).

One can recognise a CoA carboxyltransferase N-terminal domain in the interval 25–287; that stretch reads IWTKCSGCVQ…KLTQQSFSEK (263 aa). 4 residues coordinate Zn(2+): cysteine 29, cysteine 32, cysteine 48, and cysteine 51. The C4-type zinc-finger motif lies at 29–51; the sequence is CSGCVQLLYTKELERNLQVCPKC.

The protein belongs to the AccD/PCCB family. As to quaternary structure, acetyl-CoA carboxylase is a heterohexamer composed of biotin carboxyl carrier protein (AccB), biotin carboxylase (AccC) and two subunits each of ACCase subunit alpha (AccA) and ACCase subunit beta (AccD). Requires Zn(2+) as cofactor.

The protein resides in the cytoplasm. The enzyme catalyses N(6)-carboxybiotinyl-L-lysyl-[protein] + acetyl-CoA = N(6)-biotinyl-L-lysyl-[protein] + malonyl-CoA. The protein operates within lipid metabolism; malonyl-CoA biosynthesis; malonyl-CoA from acetyl-CoA: step 1/1. Component of the acetyl coenzyme A carboxylase (ACC) complex. Biotin carboxylase (BC) catalyzes the carboxylation of biotin on its carrier protein (BCCP) and then the CO(2) group is transferred by the transcarboxylase to acetyl-CoA to form malonyl-CoA. The chain is Acetyl-coenzyme A carboxylase carboxyl transferase subunit beta from Blochmanniella floridana.